We begin with the raw amino-acid sequence, 296 residues long: Complex I intermediate-associated protein 30, mitochondrial (296 aa).

The transit peptide at methionine 1 to arginine 29 directs the protein to the mitochondrion.

The protein belongs to the CIA30 family. In terms of assembly, associates with mitochondrial complex I assembly intermediates during its biogenesis.

The protein localises to the mitochondrion. Functionally, chaperone protein involved in the assembly of the mitochondrial NADH:ubiquinone oxidoreductase complex (complex I). The sequence is that of Complex I intermediate-associated protein 30, mitochondrial from Drosophila melanogaster (Fruit fly).